Here is a 509-residue protein sequence, read N- to C-terminus: 2,3-bisphosphoglycerate-independent phosphoglycerate mutase (509 aa).

Residues Asp12 and Ser62 each contribute to the Mn(2+) site. Residue Ser62 is the Phosphoserine intermediate of the active site. Residues His123, 153–154, Arg185, Arg191, 260–263, and Lys333 contribute to the substrate site; these read RD and RPDR. 5 residues coordinate Mn(2+): Asp400, His404, Asp441, His442, and His460.

It belongs to the BPG-independent phosphoglycerate mutase family. In terms of assembly, monomer. Mn(2+) is required as a cofactor.

The enzyme catalyses (2R)-2-phosphoglycerate = (2R)-3-phosphoglycerate. Its pathway is carbohydrate degradation; glycolysis; pyruvate from D-glyceraldehyde 3-phosphate: step 3/5. Its function is as follows. Catalyzes the interconversion of 2-phosphoglycerate and 3-phosphoglycerate. The sequence is that of 2,3-bisphosphoglycerate-independent phosphoglycerate mutase from Clostridium botulinum (strain ATCC 19397 / Type A).